The primary structure comprises 206 residues: Small ribosomal subunit protein uS4 (206 aa).

Residues 96–156 (TRLDNVVYRM…EKSRTQARIK (61 aa)) enclose the S4 RNA-binding domain.

It belongs to the universal ribosomal protein uS4 family. As to quaternary structure, part of the 30S ribosomal subunit. Contacts protein S5. The interaction surface between S4 and S5 is involved in control of translational fidelity.

In terms of biological role, one of the primary rRNA binding proteins, it binds directly to 16S rRNA where it nucleates assembly of the body of the 30S subunit. Functionally, with S5 and S12 plays an important role in translational accuracy. This is Small ribosomal subunit protein uS4 from Shewanella sp. (strain MR-4).